Reading from the N-terminus, the 870-residue chain is DNA mismatch repair protein MutS (870 aa).

616–623 contributes to the ATP binding site; sequence GPNMAGKS.

The protein belongs to the DNA mismatch repair MutS family.

Its function is as follows. This protein is involved in the repair of mismatches in DNA. It is possible that it carries out the mismatch recognition step. This protein has a weak ATPase activity. This Parabacteroides distasonis (strain ATCC 8503 / DSM 20701 / CIP 104284 / JCM 5825 / NCTC 11152) protein is DNA mismatch repair protein MutS.